A 790-amino-acid polypeptide reads, in one-letter code: cAMP and cAMP-inhibited cGMP 3',5'-cyclic phosphodiesterase 10A (790 aa).

3',5'-cyclic AMP is bound by residues 290–291 (RC), 334–335 (IA), Thr368, Gln387, and His519. Residues 446-763 (TSEEWQGLMR…NQWEKVIRGE (318 aa)) enclose the PDEase domain. The active-site Proton donor is His519. His519 is a 3',5'-cyclic GMP binding site. The a divalent metal cation site is built by His523, His557, Asp558, and Asp668. Residue Gln720 participates in 3',5'-cyclic AMP binding. Gln720 is a binding site for 3',5'-cyclic GMP. A disordered region spans residues 768-790 (WISGPGPAPSKSTPEKLNVKVED). Positions 780-790 (TPEKLNVKVED) are enriched in basic and acidic residues.

Belongs to the cyclic nucleotide phosphodiesterase family. In terms of assembly, homodimer. Requires a divalent metal cation as cofactor. Detected in striatum (at protein level). Detected in testis and brain.

Its subcellular location is the cytoplasm. It localises to the cytosol. The enzyme catalyses a nucleoside 3',5'-cyclic phosphate + H2O = a nucleoside 5'-phosphate + H(+). The catalysed reaction is 3',5'-cyclic AMP + H2O = AMP + H(+). It catalyses the reaction 3',5'-cyclic GMP + H2O = GMP + H(+). It participates in purine metabolism; 3',5'-cyclic AMP degradation; AMP from 3',5'-cyclic AMP: step 1/1. Its pathway is purine metabolism; 3',5'-cyclic GMP degradation; GMP from 3',5'-cyclic GMP: step 1/1. Functionally, plays a role in signal transduction by regulating the intracellular concentration of cyclic nucleotides. Can hydrolyze both cAMP and cGMP, but has higher affinity for cAMP and is more efficient with cAMP as substrate. May play a critical role in regulating cAMP and cGMP levels in the striatum, a region of the brain that contributes to the control of movement and cognition. The polypeptide is cAMP and cAMP-inhibited cGMP 3',5'-cyclic phosphodiesterase 10A (Pde10a) (Mus musculus (Mouse)).